The primary structure comprises 1011 residues: Histone deacetylase 9 (1011 aa).

Ser22 is modified (phosphoserine). An interaction with CTBP1 region spans residues 23 to 27 (PLDLR). 3 disordered regions span residues 110 to 139 (RQEQ…RAVA), 183 to 249 (TSLD…KDGN), and 262 to 304 (TESS…EQMV). Residues 136-154 (RAVASTEVKQKLQEFLLSK) are interaction with MEF2. Positions 175-343 (LWYTAAHHTS…LPAVPSQLNA (169 aa)) are interaction with MAPK10. The span at 185 to 199 (LDQSSPPLSGTSPSY) shows a compositional bias: polar residues. The span at 208 to 219 (DAKDDFPLRKTA) shows a compositional bias: basic and acidic residues. Residues 218–261 (TASEPNLKVRSRLKQKVAERRSSPLLRRKDGNVVTSFKKRMFEV) are interaction with ETV6. 2 positions are modified to phosphoserine: Ser220 and Ser240. Positions 233–248 (KVAERRSSPLLRRKDG) are enriched in basic and acidic residues. Residues 262 to 285 (TESSVSSSSPGSGPSSPNNGPTGS) are compositionally biased toward low complexity. Position 451 is a phosphoserine (Ser451). The segment at 494–536 (QLKQPGSHLEEAEEELQGDQAMQEDRAPSSGNSTRSDSSACVD) is disordered. A compositionally biased stretch (polar residues) spans 522–532 (SSGNSTRSDSS). Ser554 carries the post-translational modification Phosphoserine. The interval 631–978 (SATGIAYDPL…VNALLGNELE (348 aa)) is histone deacetylase. Zn(2+)-binding residues include Cys646, Cys648, His654, and Cys731. The active site involves His783.

It belongs to the histone deacetylase family. HD type 2 subfamily. In terms of assembly, homodimer. Interacts with CTBP1. The phosphorylated form interacts with 14-3-3. Interacts with HDAC1 and HDAC3, and probably with HDAC4 and HDAC5. Interacts with MEF2, MAPK10, ETV6, NCOR1 and BCL6. Interacts with FOXP3 in the absence of T-cell stimulation. Post-translationally, phosphorylated on Ser-220 and Ser-450; which promotes 14-3-3-binding, impairs interaction with MEF2, and antagonizes antimyogenic activity. Phosphorylated on Ser-240; which impairs nuclear accumulation. Isoform 7 is phosphorylated on Tyr-1010. Phosphorylated by the PKC kinases PKN1 and PKN2, impairing nuclear import. In terms of processing, sumoylated. Broadly expressed, with highest levels in brain, heart, muscle and testis. Isoform 3 is present in human bladder carcinoma cells (at protein level).

The protein resides in the nucleus. It carries out the reaction N(6)-acetyl-L-lysyl-[histone] + H2O = L-lysyl-[histone] + acetate. Its activity is regulated as follows. Inhibited by Trichostatin A (TSA) and suberoylanilide hydroxamic acid. In terms of biological role, responsible for the deacetylation of lysine residues on the N-terminal part of the core histones (H2A, H2B, H3 and H4). Histone deacetylation gives a tag for epigenetic repression and plays an important role in transcriptional regulation, cell cycle progression and developmental events. Represses MEF2-dependent transcription. Isoform 3 lacks active site residues and therefore is catalytically inactive. Represses MEF2-dependent transcription by recruiting HDAC1 and/or HDAC3. Seems to inhibit skeletal myogenesis and to be involved in heart development. Protects neurons from apoptosis, both by inhibiting JUN phosphorylation by MAPK10 and by repressing JUN transcription via HDAC1 recruitment to JUN promoter. The chain is Histone deacetylase 9 (HDAC9) from Homo sapiens (Human).